The chain runs to 337 residues: Phosphate acyltransferase (337 aa).

This sequence belongs to the PlsX family. As to quaternary structure, homodimer. Probably interacts with PlsY.

The protein localises to the cytoplasm. It catalyses the reaction a fatty acyl-[ACP] + phosphate = an acyl phosphate + holo-[ACP]. It functions in the pathway lipid metabolism; phospholipid metabolism. In terms of biological role, catalyzes the reversible formation of acyl-phosphate (acyl-PO(4)) from acyl-[acyl-carrier-protein] (acyl-ACP). This enzyme utilizes acyl-ACP as fatty acyl donor, but not acyl-CoA. The chain is Phosphate acyltransferase from Aquifex aeolicus (strain VF5).